The sequence spans 82 residues: Small ribosomal subunit protein bS16 (82 aa).

The protein belongs to the bacterial ribosomal protein bS16 family.

This is Small ribosomal subunit protein bS16 from Natranaerobius thermophilus (strain ATCC BAA-1301 / DSM 18059 / JW/NM-WN-LF).